A 560-amino-acid polypeptide reads, in one-letter code: Probable sulfate transporter Rv1739c (560 aa).

The tract at residues 1-436 (MIPTMTSAGW…VLGFVPGIAG (436 aa)) is required for sulfate transport in E.coli. The next 11 membrane-spanning stretches (helical) occupy residues 29-49 (VLAG…YATV), 51-71 (GLPP…YALL), 79-99 (IGPE…MAAG), 105-125 (AVLA…AGTA), 138-158 (VLVG…LGTI), 184-204 (WPTF…TRWA), 207-227 (APGP…MSLD), 256-276 (ALII…VLTA), 333-353 (LIAL…LAMF), 355-375 (IAAL…LSEF), and 394-414 (AAVL…LSIL). The region spanning 442-557 (DYPQAKRVPG…MTLPTAVQAF (116 aa)) is the STAS domain.

Belongs to the SLC26A/SulP transporter (TC 2.A.53) family.

It is found in the cell membrane. Expression in E.coli induces sulfate uptake during early- to mid-log phase growth. Uptake is maximal at pH 6.0, is sulfate-specific, requires E.coli CysA and the transmembrane segment but not the STAS domain of the protein. The protein is Probable sulfate transporter Rv1739c of Mycobacterium tuberculosis (strain ATCC 25618 / H37Rv).